The chain runs to 134 residues: Small ribosomal subunit protein uS8c (134 aa).

This sequence belongs to the universal ribosomal protein uS8 family. As to quaternary structure, part of the 30S ribosomal subunit.

It localises to the plastid. Its subcellular location is the chloroplast. In terms of biological role, one of the primary rRNA binding proteins, it binds directly to 16S rRNA central domain where it helps coordinate assembly of the platform of the 30S subunit. The chain is Small ribosomal subunit protein uS8c (rps8) from Pelargonium hortorum (Common geranium).